Consider the following 571-residue polypeptide: Urease subunit alpha (571 aa).

Residues 131–571 (GGIDAHIHFI…LPMAQRYFLF (441 aa)) enclose the Urease domain. H136, H138, and K219 together coordinate Ni(2+). K219 carries the N6-carboxylysine modification. H221 provides a ligand contact to substrate. H248 and H274 together coordinate Ni(2+). H322 acts as the Proton donor in catalysis. D362 serves as a coordination point for Ni(2+).

Belongs to the metallo-dependent hydrolases superfamily. Urease alpha subunit family. Heterotrimer of UreA (gamma), UreB (beta) and UreC (alpha) subunits. Three heterotrimers associate to form the active enzyme. Requires Ni cation as cofactor. Post-translationally, carboxylation allows a single lysine to coordinate two nickel ions.

It is found in the cytoplasm. The enzyme catalyses urea + 2 H2O + H(+) = hydrogencarbonate + 2 NH4(+). It participates in nitrogen metabolism; urea degradation; CO(2) and NH(3) from urea (urease route): step 1/1. This is Urease subunit alpha from Nostoc punctiforme (strain ATCC 29133 / PCC 73102).